The chain runs to 344 residues: Laforin, isoform 9 (344 aa).

Disordered stretches follow at residues 1–44 (MHPK…PGPG), 58–134 (GGGA…PRGH), 158–188 (PAPGAERELRPAPPTGASASGRPRRPRRRAS), and 320–344 (SLKKTQNDPTNETSVFANPRQQCAT). Over residues 77–88 (AARAGALGAARC) the composition is skewed to low complexity. A compositionally biased stretch (gly residues) spans 101–131 (RGPGPAGAGPVARGGGAGGRGGGAGRGGAGP). A compositionally biased stretch (basic residues) spans 179 to 188 (RPRRPRRRAS).

Interacts with isoform 1 and isoform 2.

The protein resides in the nucleus. The protein is Laforin, isoform 9 of Homo sapiens (Human).